A 187-amino-acid polypeptide reads, in one-letter code: Crossover junction endodeoxyribonuclease RuvC (187 aa).

Active-site residues include Asp-7, Glu-67, and Asp-140. 3 residues coordinate Mg(2+): Asp-7, Glu-67, and Asp-140.

This sequence belongs to the RuvC family. Homodimer which binds Holliday junction (HJ) DNA. The HJ becomes 2-fold symmetrical on binding to RuvC with unstacked arms; it has a different conformation from HJ DNA in complex with RuvA. In the full resolvosome a probable DNA-RuvA(4)-RuvB(12)-RuvC(2) complex forms which resolves the HJ. Mg(2+) serves as cofactor.

It localises to the cytoplasm. The enzyme catalyses Endonucleolytic cleavage at a junction such as a reciprocal single-stranded crossover between two homologous DNA duplexes (Holliday junction).. Its function is as follows. The RuvA-RuvB-RuvC complex processes Holliday junction (HJ) DNA during genetic recombination and DNA repair. Endonuclease that resolves HJ intermediates. Cleaves cruciform DNA by making single-stranded nicks across the HJ at symmetrical positions within the homologous arms, yielding a 5'-phosphate and a 3'-hydroxyl group; requires a central core of homology in the junction. The consensus cleavage sequence is 5'-(A/T)TT(C/G)-3'. Cleavage occurs on the 3'-side of the TT dinucleotide at the point of strand exchange. HJ branch migration catalyzed by RuvA-RuvB allows RuvC to scan DNA until it finds its consensus sequence, where it cleaves and resolves the cruciform DNA. The protein is Crossover junction endodeoxyribonuclease RuvC of Chlorobium phaeobacteroides (strain DSM 266 / SMG 266 / 2430).